We begin with the raw amino-acid sequence, 314 residues long: 4-hydroxy-3-methylbut-2-enyl diphosphate reductase (314 aa).

Cysteine 12 contacts [4Fe-4S] cluster. (2E)-4-hydroxy-3-methylbut-2-enyl diphosphate contacts are provided by histidine 41 and histidine 74. Dimethylallyl diphosphate contacts are provided by histidine 41 and histidine 74. Histidine 41 and histidine 74 together coordinate isopentenyl diphosphate. Cysteine 96 lines the [4Fe-4S] cluster pocket. (2E)-4-hydroxy-3-methylbut-2-enyl diphosphate is bound at residue histidine 124. Histidine 124 provides a ligand contact to dimethylallyl diphosphate. An isopentenyl diphosphate-binding site is contributed by histidine 124. The active-site Proton donor is glutamate 126. Threonine 168 contributes to the (2E)-4-hydroxy-3-methylbut-2-enyl diphosphate binding site. Cysteine 198 serves as a coordination point for [4Fe-4S] cluster. The (2E)-4-hydroxy-3-methylbut-2-enyl diphosphate site is built by serine 226, serine 227, asparagine 228, and serine 270. Dimethylallyl diphosphate is bound by residues serine 226, serine 227, asparagine 228, and serine 270. Residues serine 226, serine 227, asparagine 228, and serine 270 each coordinate isopentenyl diphosphate.

This sequence belongs to the IspH family. The cofactor is [4Fe-4S] cluster.

It catalyses the reaction isopentenyl diphosphate + 2 oxidized [2Fe-2S]-[ferredoxin] + H2O = (2E)-4-hydroxy-3-methylbut-2-enyl diphosphate + 2 reduced [2Fe-2S]-[ferredoxin] + 2 H(+). The enzyme catalyses dimethylallyl diphosphate + 2 oxidized [2Fe-2S]-[ferredoxin] + H2O = (2E)-4-hydroxy-3-methylbut-2-enyl diphosphate + 2 reduced [2Fe-2S]-[ferredoxin] + 2 H(+). It functions in the pathway isoprenoid biosynthesis; dimethylallyl diphosphate biosynthesis; dimethylallyl diphosphate from (2E)-4-hydroxy-3-methylbutenyl diphosphate: step 1/1. Its pathway is isoprenoid biosynthesis; isopentenyl diphosphate biosynthesis via DXP pathway; isopentenyl diphosphate from 1-deoxy-D-xylulose 5-phosphate: step 6/6. In terms of biological role, catalyzes the conversion of 1-hydroxy-2-methyl-2-(E)-butenyl 4-diphosphate (HMBPP) into a mixture of isopentenyl diphosphate (IPP) and dimethylallyl diphosphate (DMAPP). Acts in the terminal step of the DOXP/MEP pathway for isoprenoid precursor biosynthesis. This is 4-hydroxy-3-methylbut-2-enyl diphosphate reductase from Pseudomonas aeruginosa (strain LESB58).